The following is a 199-amino-acid chain: Putative acetyltransferase SACOL2570 (199 aa).

Belongs to the transferase hexapeptide repeat family.

This Staphylococcus aureus (strain COL) protein is Putative acetyltransferase SACOL2570.